Reading from the N-terminus, the 181-residue chain is Acireductone dioxygenase (181 aa).

4 residues coordinate Fe(2+): His97, His99, Glu103, and His141. Residues His97, His99, Glu103, and His141 each contribute to the Ni(2+) site.

The protein belongs to the acireductone dioxygenase (ARD) family. In terms of assembly, monomer. The cofactor is Fe(2+). Requires Ni(2+) as cofactor.

It carries out the reaction 1,2-dihydroxy-5-(methylsulfanyl)pent-1-en-3-one + O2 = 3-(methylsulfanyl)propanoate + CO + formate + 2 H(+). The catalysed reaction is 1,2-dihydroxy-5-(methylsulfanyl)pent-1-en-3-one + O2 = 4-methylsulfanyl-2-oxobutanoate + formate + 2 H(+). It participates in amino-acid biosynthesis; L-methionine biosynthesis via salvage pathway; L-methionine from S-methyl-5-thio-alpha-D-ribose 1-phosphate: step 5/6. In terms of biological role, catalyzes 2 different reactions between oxygen and the acireductone 1,2-dihydroxy-3-keto-5-methylthiopentene (DHK-MTPene) depending upon the metal bound in the active site. Fe-containing acireductone dioxygenase (Fe-ARD) produces formate and 2-keto-4-methylthiobutyrate (KMTB), the alpha-ketoacid precursor of methionine in the methionine recycle pathway. Ni-containing acireductone dioxygenase (Ni-ARD) produces methylthiopropionate, carbon monoxide and formate, and does not lie on the methionine recycle pathway. The polypeptide is Acireductone dioxygenase (Pseudomonas paraeruginosa (strain DSM 24068 / PA7) (Pseudomonas aeruginosa (strain PA7))).